Consider the following 468-residue polypeptide: Argininosuccinate lyase (468 aa).

Positions 33, 121, and 166 each coordinate 2-(N(omega)-L-arginino)succinate. Histidine 167 acts as the Proton acceptor in catalysis. Serine 288 (proton donor) is an active-site residue. 4 residues coordinate 2-(N(omega)-L-arginino)succinate: asparagine 296, tyrosine 328, glutamine 333, and lysine 336.

The protein belongs to the lyase 1 family. Argininosuccinate lyase subfamily. Homotetramer.

It carries out the reaction 2-(N(omega)-L-arginino)succinate = fumarate + L-arginine. Its pathway is amino-acid biosynthesis; L-arginine biosynthesis; L-arginine from L-ornithine and carbamoyl phosphate: step 3/3. This chain is Argininosuccinate lyase (ARG4), found in Candida albicans (Yeast).